A 364-amino-acid chain; its full sequence is Probable dual-specificity RNA methyltransferase RlmN (364 aa).

Catalysis depends on E107, which acts as the Proton acceptor. Positions H113–D346 constitute a Radical SAM core domain. A disulfide bridge connects residues C120 and C351. C127, C131, and C134 together coordinate [4Fe-4S] cluster. Residues G177–E178, S209, S232–H234, and N308 contribute to the S-adenosyl-L-methionine site. The S-methylcysteine intermediate role is filled by C351.

It belongs to the radical SAM superfamily. RlmN family. [4Fe-4S] cluster is required as a cofactor.

The protein resides in the cytoplasm. The enzyme catalyses adenosine(2503) in 23S rRNA + 2 reduced [2Fe-2S]-[ferredoxin] + 2 S-adenosyl-L-methionine = 2-methyladenosine(2503) in 23S rRNA + 5'-deoxyadenosine + L-methionine + 2 oxidized [2Fe-2S]-[ferredoxin] + S-adenosyl-L-homocysteine. The catalysed reaction is adenosine(37) in tRNA + 2 reduced [2Fe-2S]-[ferredoxin] + 2 S-adenosyl-L-methionine = 2-methyladenosine(37) in tRNA + 5'-deoxyadenosine + L-methionine + 2 oxidized [2Fe-2S]-[ferredoxin] + S-adenosyl-L-homocysteine. Functionally, specifically methylates position 2 of adenine 2503 in 23S rRNA and position 2 of adenine 37 in tRNAs. In Geobacillus thermodenitrificans (strain NG80-2), this protein is Probable dual-specificity RNA methyltransferase RlmN.